The sequence spans 367 residues: rRNA processing protein RCL1 (367 aa).

Serine 2 bears the N-acetylserine mark.

This sequence belongs to the RNA 3'-terminal cyclase family. Type 2 subfamily. In terms of assembly, interacts directly with BMS1 and the U3 snoRNA to form a stable subcomplex. Component of the 90S small subunit processome also known as 90S pre-ribosome that consists of the 35S pre-rRNA, early-associating ribosomal proteins most of which are part of the small ribosomal subunit, the U3 snoRNA and associated proteins.

The protein localises to the nucleus. It localises to the nucleolus. Functionally, does not have cyclase activity. Plays a role in 40S-ribosomal-subunit biogenesis in the early pre-rRNA processing steps at sites A0, A1 and A2 that are required for proper maturation of the 18S RNA. RCL1 activates BMS1 by promoting GDP/GTP exchange. In Saccharomyces cerevisiae (strain ATCC 204508 / S288c) (Baker's yeast), this protein is rRNA processing protein RCL1 (RCL1).